The following is a 651-amino-acid chain: p-hydroxybenzoic acid efflux pump subunit AaeB (651 aa).

The next 11 helical transmembrane spans lie at 11–31, 41–61, 67–87, 91–111, 119–139, 150–170, 368–388, 405–425, 429–449, 460–480, and 481–501; these read FAFK…HLQL, AAIV…SGAI, LRII…VLTI, VLTL…SSLV, FGLA…TPLL, EIVL…PRSI, LFWL…IAVV, FLLG…FIIP, QSML…GIEV, LAST…VSLF, and LDSA…LLLI.

It belongs to the aromatic acid exporter ArAE (TC 2.A.85) family.

It localises to the cell inner membrane. Forms an efflux pump with AaeA. Could function as a metabolic relief valve, allowing to eliminate certain compounds when they accumulate to high levels in the cell. The chain is p-hydroxybenzoic acid efflux pump subunit AaeB from Yersinia enterocolitica serotype O:8 / biotype 1B (strain NCTC 13174 / 8081).